We begin with the raw amino-acid sequence, 385 residues long: 6-hydroxynicotinate 3-monooxygenase (385 aa).

The signal sequence occupies residues 1 to 20 (MSQSPRIAVVGAGLGGAAAA). Residues G15, 34 to 35 (EQ), H47, R108, and L130 contribute to the FAD site. H47 functions as the Proton acceptor in the catalytic mechanism. Y215 serves as the catalytic Proton acceptor. FAD-binding positions include D294 and 307–308 (AA).

It belongs to the 6-hydroxynicotinate 3-monooxygenase family. In terms of assembly, monomer. Requires FAD as cofactor.

The catalysed reaction is 6-hydroxynicotinate + NADH + O2 + 2 H(+) = 2,5-dihydroxypyridine + CO2 + NAD(+) + H2O. Inhibited competitively by nicotinic acid with a Ki of 0.49 mM. Inhibited by thiol-specific compounds p-chloromercuribenzoate, DTNB, Ag(2)SO(4), HgCl(2), CuCl(2) and N-ethylmaleimide. No inhibition by o-phenanthroline, 8-hydroxyquinoline, EDTA, disodium 4,5-dihydroxy-m-benzenedisulfonate, fluoride, azide, KCl, LiCl, NaCl, BaCl(2), MnCl(2), MgCl(2), PBCl, ZnCl(2), CoCl(2), SnCl(2), FeSO(4), FeCl(3), NiCl(2), CdCl(2), AlCl(3), iodoacetic acid, hydro-xylamine, phenylhydrazine, semicarbazide, cysteamine, alpha,alpha-dipyridyl and urea. Functionally, flavin-dependent monooxygenase (FMO) that catalyzes the decarboxylative hydroxylation of 6-hydroxynicotinic acid (6-HNA) to 2,5-dihydroxypyridine (2,5-DHP) with concomitant oxidation of NADH, a step in the aerobic nicotinate degradation pathway. Uses NADH in preference to NADPH as an electron donor. The protein is 6-hydroxynicotinate 3-monooxygenase (nicC) of Pseudomonas fluorescens.